We begin with the raw amino-acid sequence, 510 residues long: Probable DNA ligase (510 aa).

ATP is bound at residue E210. The active-site N6-AMP-lysine intermediate is K212. Residues R217, R232, E261, F296, R367, and K373 each coordinate ATP.

It belongs to the ATP-dependent DNA ligase family. Requires Mg(2+) as cofactor.

It carries out the reaction ATP + (deoxyribonucleotide)n-3'-hydroxyl + 5'-phospho-(deoxyribonucleotide)m = (deoxyribonucleotide)n+m + AMP + diphosphate.. Its function is as follows. DNA ligase that seals nicks in double-stranded DNA during DNA replication, DNA recombination and DNA repair. The protein is Probable DNA ligase of Saccharopolyspora erythraea (strain ATCC 11635 / DSM 40517 / JCM 4748 / NBRC 13426 / NCIMB 8594 / NRRL 2338).